Consider the following 285-residue polypeptide: ATP synthase subunit a (285 aa).

The next 6 membrane-spanning stretches (helical) occupy residues 41–61 (TWHV…LWIF), 102–122 (IAPL…MDLI), 164–184 (LGVF…GGFI), 197–217 (VFVQ…ALVS), 226–246 (LFGN…IGFM), and 252–272 (FVWA…FMML).

The protein belongs to the ATPase A chain family. F-type ATPases have 2 components, CF(1) - the catalytic core - and CF(0) - the membrane proton channel. CF(1) has five subunits: alpha(3), beta(3), gamma(1), delta(1), epsilon(1). CF(0) has three main subunits: a(1), b(2) and c(9-12). The alpha and beta chains form an alternating ring which encloses part of the gamma chain. CF(1) is attached to CF(0) by a central stalk formed by the gamma and epsilon chains, while a peripheral stalk is formed by the delta and b chains.

It is found in the cell inner membrane. Key component of the proton channel; it plays a direct role in the translocation of protons across the membrane. This Pseudoalteromonas translucida (strain TAC 125) protein is ATP synthase subunit a.